The chain runs to 381 residues: Subtilisin E (381 aa).

The signal sequence occupies residues 1 to 29; the sequence is MRSKKLWISLLFALTLIFTMAFSNMSAQA. The propeptide occupies 30–106; the sequence is AGKSSTEKKY…VEEDHIAHEY (77 aa). An Inhibitor I9 domain is found at 38 to 103; that stretch reads KYIVGFKQTM…VAYVEEDHIA (66 aa). Q108 is a Ca(2+) binding site. Positions 111–380 constitute a Peptidase S8 domain; the sequence is PYGISQIKAP…KGLINVQAAA (270 aa). D138 (charge relay system) is an active-site residue. D147 contributes to the Ca(2+) binding site. H170 (charge relay system) is an active-site residue. Positions 181, 183, 185, 187, 275, 277, 280, and 303 each coordinate Ca(2+). The Charge relay system role is filled by S327.

It belongs to the peptidase S8 family. Requires Ca(2+) as cofactor.

It localises to the secreted. The catalysed reaction is Hydrolysis of proteins with broad specificity for peptide bonds, and a preference for a large uncharged residue in P1. Hydrolyzes peptide amides.. With respect to regulation, inhibited by PMSF (phenylmethylsulphonyl fluoride) and 3,4-dichloroisocoumarin but not by EDTA (shown for strain RT-5). Its function is as follows. An extracellular alkaline serine protease, it catalyzes the hydrolysis of proteins and peptide amides. The protein is Subtilisin E of Bacillus subtilis (strain 168).